A 179-amino-acid polypeptide reads, in one-letter code: Shikimate kinase (179 aa).

15 to 20 contacts ATP; that stretch reads GAGKTS. Residue threonine 19 coordinates Mg(2+). Positions 37, 61, and 83 each coordinate substrate. Arginine 122 contacts ATP. Substrate is bound at residue arginine 142.

This sequence belongs to the shikimate kinase family. As to quaternary structure, monomer. It depends on Mg(2+) as a cofactor.

It localises to the cytoplasm. It carries out the reaction shikimate + ATP = 3-phosphoshikimate + ADP + H(+). It functions in the pathway metabolic intermediate biosynthesis; chorismate biosynthesis; chorismate from D-erythrose 4-phosphate and phosphoenolpyruvate: step 5/7. Functionally, catalyzes the specific phosphorylation of the 3-hydroxyl group of shikimic acid using ATP as a cosubstrate. This Coxiella burnetii (strain Dugway 5J108-111) protein is Shikimate kinase.